The primary structure comprises 393 residues: Glucose-1-phosphate adenylyltransferase (393 aa).

Alpha-D-glucose 1-phosphate is bound by residues tyrosine 105, glycine 170, 185–186 (EK), and serine 196.

This sequence belongs to the bacterial/plant glucose-1-phosphate adenylyltransferase family. Homotetramer.

The enzyme catalyses alpha-D-glucose 1-phosphate + ATP + H(+) = ADP-alpha-D-glucose + diphosphate. It functions in the pathway glycan biosynthesis; glycogen biosynthesis. Involved in the biosynthesis of ADP-glucose, a building block required for the elongation reactions to produce glycogen. Catalyzes the reaction between ATP and alpha-D-glucose 1-phosphate (G1P) to produce pyrophosphate and ADP-Glc. This is Glucose-1-phosphate adenylyltransferase from Clostridium perfringens (strain 13 / Type A).